The chain runs to 506 residues: Cysteine--tRNA ligase (506 aa).

Cys-34 is a binding site for Zn(2+). A 'HIGH' region motif is present at residues 36 to 46 (PTVYDFAHIGN). Cys-230, His-269, and Glu-273 together coordinate Zn(2+). A 'KMSKS' region motif is present at residues 302–306 (KMSKS). Lys-305 contacts ATP.

This sequence belongs to the class-I aminoacyl-tRNA synthetase family. As to quaternary structure, monomer. Requires Zn(2+) as cofactor.

The protein resides in the cytoplasm. The catalysed reaction is tRNA(Cys) + L-cysteine + ATP = L-cysteinyl-tRNA(Cys) + AMP + diphosphate. The polypeptide is Cysteine--tRNA ligase (Brucella abortus (strain S19)).